We begin with the raw amino-acid sequence, 166 residues long: Interferon gamma (166 aa).

A signal peptide spans 1-23 (MKYTSYFLALLLCVLLGFSGSYG). Gln-24 is modified (pyrrolidone carboxylic acid). N-linked (GlcNAc...) asparagine glycosylation is found at Asn-39 and Asn-106.

Belongs to the type II (or gamma) interferon family. As to quaternary structure, homodimer. Interacts with IFNGR1 (via extracellular domain); this interaction promotes IFNGR1 dimerization. As to expression, released primarily from activated T lymphocytes.

It is found in the secreted. Type II interferon produced by immune cells such as T-cells and NK cells that plays crucial roles in antimicrobial, antiviral, and antitumor responses by activating effector immune cells and enhancing antigen presentation. Primarily signals through the JAK-STAT pathway after interaction with its receptor IFNGR1 to affect gene regulation. Upon IFNG binding, IFNGR1 intracellular domain opens out to allow association of downstream signaling components JAK2, JAK1 and STAT1, leading to STAT1 activation, nuclear translocation and transcription of IFNG-regulated genes. Many of the induced genes are transcription factors such as IRF1 that are able to further drive regulation of a next wave of transcription. Plays a role in class I antigen presentation pathway by inducing a replacement of catalytic proteasome subunits with immunoproteasome subunits. In turn, increases the quantity, quality, and repertoire of peptides for class I MHC loading. Increases the efficiency of peptide generation also by inducing the expression of activator PA28 that associates with the proteasome and alters its proteolytic cleavage preference. Up-regulates as well MHC II complexes on the cell surface by promoting expression of several key molecules such as cathepsins B/CTSB, H/CTSH, and L/CTSL. Participates in the regulation of hematopoietic stem cells during development and under homeostatic conditions by affecting their development, quiescence, and differentiation. This Bos indicus (Zebu) protein is Interferon gamma (IFNG).